The sequence spans 342 residues: Isopentenyl-diphosphate delta-isomerase (342 aa).

11-12 (RK) is a substrate binding site. FMN is bound by residues Ser68, 69 to 71 (SMT), Ser99, and Asn128. A substrate-binding site is contributed by 99-101 (SQR). Gln162 is a substrate binding site. Glu163 provides a ligand contact to Mg(2+). Residues Lys194, Ser219, Thr224, 275–277 (GVR), and 296–297 (AK) contribute to the FMN site.

The protein belongs to the IPP isomerase type 2 family. As to quaternary structure, homooctamer. Dimer of tetramers. FMN is required as a cofactor. Requires NADPH as cofactor. The cofactor is Mg(2+).

The protein resides in the cytoplasm. It catalyses the reaction isopentenyl diphosphate = dimethylallyl diphosphate. Involved in the biosynthesis of isoprenoids. Catalyzes the 1,3-allylic rearrangement of the homoallylic substrate isopentenyl (IPP) to its allylic isomer, dimethylallyl diphosphate (DMAPP). This chain is Isopentenyl-diphosphate delta-isomerase, found in Legionella pneumophila (strain Lens).